Reading from the N-terminus, the 199-residue chain is uncharacterized protein (199 aa).

The disordered stretch occupies residues 1-48; it reads MSANEFYSSGQQGQYNQQNNQERTGAPNNGQYGADNGNPNGERGLFST. Ser-2 is subject to N-acetylserine. A compositionally biased stretch (low complexity) spans 7–21; it reads YSSGQQGQYNQQNNQ. A compositionally biased stretch (polar residues) spans 22–31; that stretch reads ERTGAPNNGQ. 2 positions are modified to phosphoserine: Ser-53 and Ser-70. Positions 89–199 are disordered; that stretch reads RKEHKQQEQY…RQGFNGGSRW (111 aa). Gly residues-rich tracts occupy residues 124 to 163, 170 to 179, and 186 to 199; these read GGFG…GFGG, GGPGGQGFGG, and GGQG…GSRW.

The protein localises to the mitochondrion. This is an uncharacterized protein from Saccharomyces cerevisiae (strain ATCC 204508 / S288c) (Baker's yeast).